Reading from the N-terminus, the 291-residue chain is 4-hydroxy-tetrahydrodipicolinate synthase (291 aa).

Residue T47 coordinates pyruvate. The active-site Proton donor/acceptor is the Y136. The active-site Schiff-base intermediate with substrate is the K164. A pyruvate-binding site is contributed by I206.

The protein belongs to the DapA family. As to quaternary structure, homotetramer; dimer of dimers.

It localises to the cytoplasm. The enzyme catalyses L-aspartate 4-semialdehyde + pyruvate = (2S,4S)-4-hydroxy-2,3,4,5-tetrahydrodipicolinate + H2O + H(+). Its pathway is amino-acid biosynthesis; L-lysine biosynthesis via DAP pathway; (S)-tetrahydrodipicolinate from L-aspartate: step 3/4. Its function is as follows. Catalyzes the condensation of (S)-aspartate-beta-semialdehyde [(S)-ASA] and pyruvate to 4-hydroxy-tetrahydrodipicolinate (HTPA). This Leuconostoc citreum (strain KM20) protein is 4-hydroxy-tetrahydrodipicolinate synthase.